The following is a 237-amino-acid chain: C-type lectin domain family 4 member A (237 aa).

At 1–48 (MTSEITYAEVRFKNEFKSSGINTASSAASKERTAPHKSNTGFPKLLCA) the chain is on the cytoplasmic side. Positions 5-10 (ITYAEV) match the ITIM motif motif. A helical; Signal-anchor for type II membrane protein transmembrane segment spans residues 49 to 69 (SLLIFFLLLAISFFIAFVIFF). Residues 70–237 (QKYSQLLEKK…SVCEMMKIHL (168 aa)) lie on the Extracellular side of the membrane. Intrachain disulfides connect Cys106/Cys117, Cys134/Cys230, and Cys203/Cys222. Positions 113 to 231 (FSSNCYFIST…CLGPQRSVCE (119 aa)) constitute a C-type lectin domain. Residues Val143, Asn145, and Glu149 each contribute to the Ca(2+) site. Asn185 carries an N-linked (GlcNAc...) asparagine glycan. Positions 195, 197, and 201 each coordinate Ca(2+). Alpha-D-mannopyranose is bound by residues 195–197 (EPS) and Glu201. 207–209 (NFR) lines the N-acetyl-D-glucosamine pocket. Ca(2+)-binding residues include Asn218, Asp219, and Glu231.

May interact with PTPN6 via its ITIM motif. In terms of tissue distribution, expressed preferentially in hematopoietic tissues. Expressed in all circulating Ag-presenting cells such as dendritic cells, myeloid cells, monocytes, macrophages, B-cells and epidermal Langerhans cells (at protein level). Expressed in peripheral blood leukocytes, neutrophils, moderate quantities in spleen, lymph node, and bone marrow, and at very low levels in thymus.

Its subcellular location is the cell membrane. C-type lectin receptor that binds carbohydrates mannose and fucose but also weakly interacts with N-acetylglucosamine (GlcNAc) in a Ca(2+)-dependent manner. Involved in regulating immune reactivity. Once triggered by antigen, it is internalized by clathrin-dependent endocytosis and delivers its antigenic cargo into the antigen presentation pathway resulting in cross-priming of CD8(+) T cells. This cross-presentation and cross-priming are enhanced by TLR7 and TLR8 agonists with increased expansion of the CD8(+) T cells, high production of IFNG and TNF with reduced levels of IL4, IL5 and IL13. In plasmacytoid dendritic cells, inhibits TLR9-mediated IFNA and TNF production. May be involved via its ITIM motif (immunoreceptor tyrosine-based inhibitory motifs) in the inhibition of B-cell-receptor-mediated calcium mobilization and protein tyrosine phosphorylation. Its function is as follows. (Microbial infection) Involved in the interaction between HIV-1 virus and dendritic cells. Enhances HIV-1 binding/entry and virus infection. Requires ITIM motif-associated signal transduction pathway involving phosphatases PTPN6 and PTPN11, SYK, Src kinases and MAP kinases. This chain is C-type lectin domain family 4 member A, found in Homo sapiens (Human).